The sequence spans 141 residues: Large ribosomal subunit protein uL11 (141 aa).

It belongs to the universal ribosomal protein uL11 family. In terms of assembly, part of the ribosomal stalk of the 50S ribosomal subunit. Interacts with L10 and the large rRNA to form the base of the stalk. L10 forms an elongated spine to which L12 dimers bind in a sequential fashion forming a multimeric L10(L12)X complex. In terms of processing, one or more lysine residues are methylated.

In terms of biological role, forms part of the ribosomal stalk which helps the ribosome interact with GTP-bound translation factors. In Listeria innocua serovar 6a (strain ATCC BAA-680 / CLIP 11262), this protein is Large ribosomal subunit protein uL11.